The sequence spans 659 residues: 1,4-alpha-glucan branching enzyme GlgB 2 (659 aa).

The segment at Met1–Ser26 is disordered. Asp337 functions as the Nucleophile in the catalytic mechanism. The Proton donor role is filled by Glu390.

This sequence belongs to the glycosyl hydrolase 13 family. GlgB subfamily. As to quaternary structure, monomer.

The enzyme catalyses Transfers a segment of a (1-&gt;4)-alpha-D-glucan chain to a primary hydroxy group in a similar glucan chain.. It functions in the pathway glycan biosynthesis; glycogen biosynthesis. Catalyzes the formation of the alpha-1,6-glucosidic linkages in glycogen by scission of a 1,4-alpha-linked oligosaccharide from growing alpha-1,4-glucan chains and the subsequent attachment of the oligosaccharide to the alpha-1,6 position. The sequence is that of 1,4-alpha-glucan branching enzyme GlgB 2 from Clostridium perfringens (strain SM101 / Type A).